The chain runs to 130 residues: Small ribosomal subunit protein uS9 (130 aa).

It belongs to the universal ribosomal protein uS9 family.

This Polaromonas sp. (strain JS666 / ATCC BAA-500) protein is Small ribosomal subunit protein uS9.